A 128-amino-acid polypeptide reads, in one-letter code: Probable 4-amino-4-deoxy-L-arabinose-phosphoundecaprenol flippase subunit ArnF (128 aa).

At 1 to 5 (MKGYG) the chain is on the cytoplasmic side. A helical membrane pass occupies residues 6–26 (WGIGSVVLVTVAQLILKWGMM). The Periplasmic segment spans residues 27-47 (NTPLMSLADINGQFVFNHLPQ). The chain crosses the membrane as a helical span at residues 48-68 (FIAVICGLAGYALSMLCWFFA). Topologically, residues 69 to 77 (LRYLPLNRA) are cytoplasmic. The helical transmembrane segment at 78–98 (YPLLSLSYALVYLGAVSLPWF) threads the bilayer. Residues 99 to 101 (SES) are Periplasmic-facing. The chain crosses the membrane as a helical span at residues 102 to 122 (ATLLKTLGAGFILLGIWLINT). The Cytoplasmic portion of the chain corresponds to 123 to 128 (KPIAKD).

Belongs to the ArnF family. As to quaternary structure, heterodimer of ArnE and ArnF.

It localises to the cell inner membrane. It functions in the pathway bacterial outer membrane biogenesis; lipopolysaccharide biosynthesis. Functionally, translocates 4-amino-4-deoxy-L-arabinose-phosphoundecaprenol (alpha-L-Ara4N-phosphoundecaprenol) from the cytoplasmic to the periplasmic side of the inner membrane. The sequence is that of Probable 4-amino-4-deoxy-L-arabinose-phosphoundecaprenol flippase subunit ArnF from Yersinia enterocolitica serotype O:8 / biotype 1B (strain NCTC 13174 / 8081).